The chain runs to 202 residues: LexA repressor (202 aa).

Residues Arg28–Lys48 constitute a DNA-binding region (H-T-H motif). Active-site for autocatalytic cleavage activity residues include Ser119 and Lys156.

Belongs to the peptidase S24 family. Homodimer.

It carries out the reaction Hydrolysis of Ala-|-Gly bond in repressor LexA.. In terms of biological role, represses a number of genes involved in the response to DNA damage (SOS response), including recA and lexA. Binds to the 16 bp palindromic sequence 5'-CTGTATATATATACAG-3'. In the presence of single-stranded DNA, RecA interacts with LexA causing an autocatalytic cleavage which disrupts the DNA-binding part of LexA, leading to derepression of the SOS regulon and eventually DNA repair. The chain is LexA repressor from Citrobacter koseri (strain ATCC BAA-895 / CDC 4225-83 / SGSC4696).